A 105-amino-acid chain; its full sequence is N(4)-acetylcytidine amidohydrolase (105 aa).

One can recognise an ASCH domain in the interval 7–93 (TFFERFEHDI…VIAEIYPGLE (87 aa)). K21 functions as the Proton acceptor in the catalytic mechanism. The active-site Nucleophile is the T24. The active-site Proton donor is E74.

Belongs to the N(4)-acetylcytidine amidohydrolase family.

The catalysed reaction is N(4)-acetylcytidine + H2O = cytidine + acetate + H(+). The enzyme catalyses N(4)-acetyl-2'-deoxycytidine + H2O = 2'-deoxycytidine + acetate + H(+). It carries out the reaction N(4)-acetylcytosine + H2O = cytosine + acetate + H(+). Functionally, catalyzes the hydrolysis of N(4)-acetylcytidine (ac4C). The polypeptide is N(4)-acetylcytidine amidohydrolase (Shewanella baltica (strain OS185)).